The sequence spans 133 residues: Large ribosomal subunit protein uL15 (133 aa).

The segment at Met1–Ile64 is disordered.

Belongs to the universal ribosomal protein uL15 family. Part of the 50S ribosomal subunit.

Binds to the 23S rRNA. This is Large ribosomal subunit protein uL15 from Helicobacter pylori (strain Shi470).